The primary structure comprises 185 residues: Ribosome-recycling factor (185 aa).

It belongs to the RRF family.

It localises to the cytoplasm. Functionally, responsible for the release of ribosomes from messenger RNA at the termination of protein biosynthesis. May increase the efficiency of translation by recycling ribosomes from one round of translation to another. This Clostridium perfringens (strain ATCC 13124 / DSM 756 / JCM 1290 / NCIMB 6125 / NCTC 8237 / Type A) protein is Ribosome-recycling factor.